Consider the following 226-residue polypeptide: Ribonuclease 3 (226 aa).

The RNase III domain maps to 6 to 128; it reads FNKLQKKMGY…IIGGIFLDSN (123 aa). Position 41 (Glu-41) interacts with Mg(2+). Residue Asp-45 is part of the active site. Asn-114 and Glu-117 together coordinate Mg(2+). Residue Glu-117 is part of the active site. Positions 155 to 225 constitute a DRBM domain; that stretch reads DPKTRLQEYL…AKQALLLFNI (71 aa).

Belongs to the ribonuclease III family. Homodimer. It depends on Mg(2+) as a cofactor.

The protein localises to the cytoplasm. It catalyses the reaction Endonucleolytic cleavage to 5'-phosphomonoester.. In terms of biological role, digests double-stranded RNA. Involved in the processing of primary rRNA transcript to yield the immediate precursors to the large and small rRNAs (23S and 16S). Processes some mRNAs, and tRNAs when they are encoded in the rRNA operon. Processes pre-crRNA and tracrRNA of type II CRISPR loci if present in the organism. The protein is Ribonuclease 3 of Wigglesworthia glossinidia brevipalpis.